A 422-amino-acid polypeptide reads, in one-letter code: 3-isopropylmalate dehydratase large subunit (422 aa).

Residues Cys303, Cys363, and Cys366 each contribute to the [4Fe-4S] cluster site.

The protein belongs to the aconitase/IPM isomerase family. LeuC type 2 subfamily. Heterodimer of LeuC and LeuD. [4Fe-4S] cluster serves as cofactor.

It catalyses the reaction (2R,3S)-3-isopropylmalate = (2S)-2-isopropylmalate. The protein operates within amino-acid biosynthesis; L-leucine biosynthesis; L-leucine from 3-methyl-2-oxobutanoate: step 2/4. In terms of biological role, catalyzes the isomerization between 2-isopropylmalate and 3-isopropylmalate, via the formation of 2-isopropylmaleate. In Wolinella succinogenes (strain ATCC 29543 / DSM 1740 / CCUG 13145 / JCM 31913 / LMG 7466 / NCTC 11488 / FDC 602W) (Vibrio succinogenes), this protein is 3-isopropylmalate dehydratase large subunit.